A 91-amino-acid polypeptide reads, in one-letter code: Acylphosphatase (91 aa).

The 89-residue stretch at 3 to 91 (HIKVNVKGQV…TELTKFEVKY (89 aa)) folds into the Acylphosphatase-like domain. Residues Arg-18 and Asn-36 contribute to the active site.

It belongs to the acylphosphatase family.

The enzyme catalyses an acyl phosphate + H2O = a carboxylate + phosphate + H(+). The polypeptide is Acylphosphatase (acyP) (Oceanobacillus iheyensis (strain DSM 14371 / CIP 107618 / JCM 11309 / KCTC 3954 / HTE831)).